Consider the following 331-residue polypeptide: Isopenicillin N synthase (331 aa).

Residues Arg-87, Tyr-91, Ser-183, and Tyr-189 each contribute to the isopenicillin N site. Arg-87, Tyr-91, Ser-183, Tyr-189, His-214, and Asp-216 together coordinate N-[(5S)-5-amino-5-carboxypentanoyl]-L-cysteinyl-D-valine. The region spanning 176-288 (KKEDALSSVV…RQSLPFFVNL (113 aa)) is the Fe2OG dioxygenase domain. The Fe(2+) site is built by His-214, Asp-216, and His-270. A 2-oxoglutarate-binding site is contributed by Arg-279. Ser-281 contributes to the isopenicillin N binding site. Ser-281 contacts N-[(5S)-5-amino-5-carboxypentanoyl]-L-cysteinyl-D-valine.

This sequence belongs to the iron/ascorbate-dependent oxidoreductase family. As to quaternary structure, monomer. The cofactor is Fe(2+).

It is found in the cytoplasm. The protein resides in the cytosol. It carries out the reaction N-[(5S)-5-amino-5-carboxypentanoyl]-L-cysteinyl-D-valine + O2 = isopenicillin N + 2 H2O. It functions in the pathway antibiotic biosynthesis; penicillin G biosynthesis; penicillin G from L-alpha-aminoadipate and L-cysteine and L-valine: step 2/3. Functionally, isopenicillin N synthase; part of the gene cluster that mediates the biosynthesis of penicillin, the world's most important antibiotic. IpnA catalyzes the cyclization of the tripeptide N-[(5S)-5-amino-5-carboxypentanoyl]-L-cysteinyl-D-valine (LLD-ACV or ACV) to form isopenicillin N (IPN) that contains the beta-lactam nucleus. The penicillin biosynthesis occurs via 3 enzymatic steps, the first corresponding to the production of the tripeptide N-[(5S)-5-amino-5-carboxypentanoyl]-L-cysteinyl-D-valine (LLD-ACV or ACV) by the NRPS acvA. The tripeptide ACV is then cyclized to isopenicillin N (IPN) by the isopenicillin N synthase ipnA that forms the beta-lactam nucleus. Finally, the alpha-aminoadipyl side chain is exchanged for phenylacetic acid by the isopenicillin N acyltransferase aatA to yield penicillin in the peroxisomal matrix. The protein is Isopenicillin N synthase of Penicillium chrysogenum (Penicillium notatum).